We begin with the raw amino-acid sequence, 190 residues long: B3 domain-containing protein At4g01580 (190 aa).

The disordered stretch occupies residues 1-25; it reads MVITRNMKARATSVSHRQSQQDPES. A compositionally biased stretch (polar residues) spans 12-23; it reads TSVSHRQSQQDP. A DNA-binding region (TF-B3) is located at residues 29–122; sequence KFFKLVLPST…SFRVIIFNAS (94 aa).

It is found in the nucleus. This Arabidopsis thaliana (Mouse-ear cress) protein is B3 domain-containing protein At4g01580.